The following is an 807-amino-acid chain: DNA gyrase subunit B (807 aa).

Residues 429–543 (SELFIVEGDS…KGYLYIAQPP (115 aa)) form the Toprim domain. Mg(2+) contacts are provided by glutamate 435, aspartate 508, and aspartate 510.

It belongs to the type II topoisomerase GyrB family. As to quaternary structure, heterotetramer, composed of two GyrA and two GyrB chains. In the heterotetramer, GyrA contains the active site tyrosine that forms a transient covalent intermediate with DNA, while GyrB binds cofactors and catalyzes ATP hydrolysis. Mg(2+) is required as a cofactor. It depends on Mn(2+) as a cofactor. The cofactor is Ca(2+).

The protein resides in the cytoplasm. The catalysed reaction is ATP-dependent breakage, passage and rejoining of double-stranded DNA.. Functionally, a type II topoisomerase that negatively supercoils closed circular double-stranded (ds) DNA in an ATP-dependent manner to modulate DNA topology and maintain chromosomes in an underwound state. Negative supercoiling favors strand separation, and DNA replication, transcription, recombination and repair, all of which involve strand separation. Also able to catalyze the interconversion of other topological isomers of dsDNA rings, including catenanes and knotted rings. Type II topoisomerases break and join 2 DNA strands simultaneously in an ATP-dependent manner. The protein is DNA gyrase subunit B of Rickettsia typhi (strain ATCC VR-144 / Wilmington).